We begin with the raw amino-acid sequence, 398 residues long: 2,3-bisphosphoglycerate-independent phosphoglycerate mutase (398 aa).

This sequence belongs to the BPG-independent phosphoglycerate mutase family. A-PGAM subfamily.

It catalyses the reaction (2R)-2-phosphoglycerate = (2R)-3-phosphoglycerate. Its pathway is carbohydrate degradation; glycolysis; pyruvate from D-glyceraldehyde 3-phosphate: step 3/5. Its function is as follows. Catalyzes the interconversion of 2-phosphoglycerate and 3-phosphoglycerate. The protein is 2,3-bisphosphoglycerate-independent phosphoglycerate mutase of Methanosarcina barkeri (strain Fusaro / DSM 804).